Consider the following 128-residue polypeptide: Con-Ins F2b (128 aa).

The N-terminal stretch at 1-24 is a signal peptide; the sequence is MTTSSYFLLVALGLLLYVCRSSFG. Intrachain disulfides connect C29-C104, C41-C107, C53-C120, and C106-C111. The propeptide at 59–89 is c peptide; it reads LQGGTGKKRGRASLLRKRRAFLSMLKARAKR. E115 is modified (4-carboxyglutamate; partial). S127 is subject to Serine amide.

The protein belongs to the insulin family. As to quaternary structure, heterodimer of A and B chains; disulfide-linked. In terms of tissue distribution, expressed by the venom gland.

Its subcellular location is the secreted. This venom insulin facilitates prey capture by rapidly inducing hypoglycemic shock. Intraperitoneal injection of this peptide into zebrafish lowers blood glucose with the same potency than human insulin. In vivo, when applied to water, this peptide reduces overall locomotor activity of zebrafish larvae, observed as a significant decrease in the percentage of time spent swimming and movement frequency. This Conus floridulus (Cone snail) protein is Con-Ins F2b.